We begin with the raw amino-acid sequence, 222 residues long: Ribosomal RNA small subunit methyltransferase G (222 aa).

Residues Gly82, Leu87, 132–133 (AE), and Arg150 each bind S-adenosyl-L-methionine.

It belongs to the methyltransferase superfamily. RNA methyltransferase RsmG family.

Its subcellular location is the cytoplasm. Functionally, specifically methylates the N7 position of guanine in position 518 of 16S rRNA. This is Ribosomal RNA small subunit methyltransferase G from Corynebacterium jeikeium (strain K411).